Reading from the N-terminus, the 391-residue chain is uncharacterized protein (391 aa).

Residues 235–330 (VFILSRINLL…LYLKNETQKS (96 aa)) form the HTH arsR-type domain.

This is an uncharacterized protein from Methanocaldococcus jannaschii (strain ATCC 43067 / DSM 2661 / JAL-1 / JCM 10045 / NBRC 100440) (Methanococcus jannaschii).